A 520-amino-acid polypeptide reads, in one-letter code: Trichothecene O-acetyltransferase TRI3 (520 aa).

The tract at residues 1–23 (MGSKLPELPKLSPEKHRWEKSNV) is disordered. Residues 12–23 (SPEKHRWEKSNV) show a composition bias toward basic and acidic residues.

This sequence belongs to the trichothecene O-acetyltransferase family.

It participates in sesquiterpene biosynthesis; trichothecene biosynthesis. Its function is as follows. Trichothecene O-acetyltransferase; part of the gene cluster that mediates the production of the antimicrobial trichothecene harzianum A (HA) that plays a role in Botrytis cinerea antagonistic activity and plant defense priming. The biosynthesis of harzianum A begins with the cyclization of farnesyl diphosphate to trichodiene and is catalyzed by the trichodiene synthase TRI5. Trichodiene undergoes a series of oxygenations catalyzed by the cytochrome P450 monooxygenase TRI4. TRI4 controls the addition of 3 oxygens at C-2, C-11, and the C-12, C-13-epoxide to form the intermediate isotrichodiol. Isotrichodiol then undergoes a non-enzymatic isomerization and cyclization to form 12,13-epoxytrichothec-9-ene (EPT) which is further converted to trichodermol by the cytochrome P450 monooxygenase TRI11 via C-4 hydroxylation. The last step of HA synthesis is esterification of an octatriendioyl moiety to the C-4 oxygen of trichodermol. The octatriendioyl moiety is probably produced by the polyketide synthase TRI17 and the esterification performed by the trichothecene O-acetyltransferase TRI3. The sequence is that of Trichothecene O-acetyltransferase TRI3 from Trichoderma arundinaceum.